The primary structure comprises 240 residues: HTH-type transcriptional regulator Mce2R (240 aa).

One can recognise an HTH gntR-type domain in the interval 9 to 77 (RSVPEEVFEQ…QGDVTTVRDF (69 aa)). Residues 37–56 (ERRLAELLGVSRPAVREALK) constitute a DNA-binding region (H-T-H motif).

In terms of biological role, negatively regulates the expression of its operon as well as expression of end (endonuclease 4). The sequence is that of HTH-type transcriptional regulator Mce2R (mce2R) from Mycobacterium tuberculosis (strain CDC 1551 / Oshkosh).